A 277-amino-acid chain; its full sequence is Putative glucose-6-phosphate/phosphate-translocator-like protein 1 (277 aa).

5 consecutive transmembrane segments (helical) span residues 8 to 28 (VLPS…WWAL), 46 to 66 (LWLT…VSWV), 124 to 143 (MIGF…RNIF), 153 to 173 (VSVM…VTPF), and 230 to 250 (PLKH…FIYS).

This sequence belongs to the TPT transporter family. GPT (TC 2.A.7.9) subfamily.

It localises to the membrane. This is Putative glucose-6-phosphate/phosphate-translocator-like protein 1 from Arabidopsis thaliana (Mouse-ear cress).